A 463-amino-acid polypeptide reads, in one-letter code: MVNRRIAEILRSGQPDESLVVQGWVRTKRELKGFAFIEVNDGSSLGNLQVVINQDLPDYAVIVKQLNTGASVEVNGVLVASQGKGQRIELKAEAVKVYGEADPETYPLQKKRHSFEFLRTIGHLRSRTNSFGAVFRVRNACSAAIHQFFQERGFLWVHTPIITASDCEGAGELFSVTSLDLKQIPRTENQGIDYSQDFFAKPTYLTVSGQLEAEVMAMAFSNVYTFGPTFRAENSNTSRHLAEFWMVEPEMAFCDLEGDMDLAEAFLKHIFNHVLEKCPEDMEFFNQRIDNTVLATAENIINNQFERLTYTDAIKLLEKADVKFEYPVSWGLDLQSEHERYLAEQLFKKPVIVTDYPAQIKAFYMRLSDDEKTVRAMDVLAPKIGEIIGGSQREERLDVLERRVLAQGMQPEDLWWYLDLRRYGTVPHAGFGLGFERLVQFITGMGNIRDVIPFPRTPQNAEF.

The protein belongs to the class-II aminoacyl-tRNA synthetase family. As to quaternary structure, homodimer.

It is found in the cytoplasm. It catalyses the reaction tRNA(Asn) + L-asparagine + ATP = L-asparaginyl-tRNA(Asn) + AMP + diphosphate + H(+). This Nostoc sp. (strain PCC 7120 / SAG 25.82 / UTEX 2576) protein is Asparagine--tRNA ligase.